The primary structure comprises 238 residues: Ditrans,polycis-undecaprenyl-diphosphate synthase ((2E,6E)-farnesyl-diphosphate specific) (238 aa).

Aspartate 14 is a catalytic residue. Aspartate 14 is a binding site for Mg(2+). Residues 15–18 (GNGR), tryptophan 19, arginine 27, histidine 31, and 59–61 (SSE) each bind substrate. Residue asparagine 62 is the Proton acceptor of the active site. Residues tryptophan 63, arginine 65, arginine 182, and 188-190 (RIS) each bind substrate. Position 201 (glutamate 201) interacts with Mg(2+).

The protein belongs to the UPP synthase family. Homodimer. The cofactor is Mg(2+).

It catalyses the reaction 8 isopentenyl diphosphate + (2E,6E)-farnesyl diphosphate = di-trans,octa-cis-undecaprenyl diphosphate + 8 diphosphate. In terms of biological role, catalyzes the sequential condensation of isopentenyl diphosphate (IPP) with (2E,6E)-farnesyl diphosphate (E,E-FPP) to yield (2Z,6Z,10Z,14Z,18Z,22Z,26Z,30Z,34E,38E)-undecaprenyl diphosphate (di-trans,octa-cis-UPP). UPP is the precursor of glycosyl carrier lipid in the biosynthesis of bacterial cell wall polysaccharide components such as peptidoglycan and lipopolysaccharide. The polypeptide is Ditrans,polycis-undecaprenyl-diphosphate synthase ((2E,6E)-farnesyl-diphosphate specific) (Legionella pneumophila subsp. pneumophila (strain Philadelphia 1 / ATCC 33152 / DSM 7513)).